The following is a 440-amino-acid chain: Probable exopolygalacturonase C (440 aa).

Residues 1-19 form the signal peptide; the sequence is MSVFKASFLFLLSSSLVHG. N-linked (GlcNAc...) asparagine glycosylation is found at N82 and N99. PbH1 repeat units follow at residues 215–236, 238–259, and 265–288; these read GTNI…AVGA, SHDT…SIGS, and TDFA…YAAR. D229 acts as the Proton donor in catalysis. H253 is an active-site residue. N-linked (GlcNAc...) asparagine glycans are attached at residues N269, N301, N311, and N334. C387 and C393 are oxidised to a cystine. Residues N417 and N432 are each glycosylated (N-linked (GlcNAc...) asparagine).

The protein belongs to the glycosyl hydrolase 28 family.

Its subcellular location is the secreted. It carries out the reaction [(1-&gt;4)-alpha-D-galacturonosyl](n) + H2O = alpha-D-galacturonate + [(1-&gt;4)-alpha-D-galacturonosyl](n-1). Its function is as follows. Specific in hydrolyzing the terminal glycosidic bond of polygalacturonic acid and oligogalacturonates. The polypeptide is Probable exopolygalacturonase C (pgxC) (Aspergillus niger (strain ATCC MYA-4892 / CBS 513.88 / FGSC A1513)).